The primary structure comprises 592 residues: Cytosolic purine 5'-nucleotidase (592 aa).

Over residues 1-15 (MAENNNNNNNNNNNN) the composition is skewed to low complexity. Residues 1–37 (MAENNNNNNNNNNNNVSTPPHQKPHLTTGLRTSSSGL) are disordered. Catalysis depends on aspartate 122, which acts as the Nucleophile. The IMP site is built by aspartate 122 and aspartate 124. Positions 122 and 124 each coordinate Mg(2+). The active-site Proton donor is the aspartate 124. Residue asparagine 226 participates in ATP binding. The tract at residues 252 to 273 (LTEEVADEQQQMNSPPLSSLGS) is disordered. Over residues 259–273 (EQQQMNSPPLSSLGS) the composition is skewed to polar residues. Residues arginine 299, aspartate 303, lysine 312, threonine 347, asparagine 348, serine 349, and lysine 385 each contribute to the IMP site. Residue aspartate 444 participates in Mg(2+) binding. ATP contacts are provided by glutamine 547 and arginine 550.

The protein belongs to the 5'(3')-deoxyribonucleotidase family. Homotetramer. Mg(2+) is required as a cofactor.

Its subcellular location is the cytoplasm. It is found in the cytosol. It catalyses the reaction a ribonucleoside 5'-phosphate + H2O = a ribonucleoside + phosphate. The catalysed reaction is a 2'-deoxyribonucleoside + a ribonucleoside 5'-phosphate = a ribonucleoside + a 2'-deoxyribonucleoside 5'-phosphate. Broad specificity cytosolic 5'-nucleotidase that catalyzes the dephosphorylation of 6-hydroxypurine nucleoside 5'-monophosphates. In addition, possesses a phosphotransferase activity by which it can transfer a phosphate from a donor nucleoside monophosphate to an acceptor nucleoside. Through these activities regulates the purine nucleoside/nucleotide pools within the cell. In Dictyostelium discoideum (Social amoeba), this protein is Cytosolic purine 5'-nucleotidase (nt5c2).